Consider the following 761-residue polypeptide: BMP/retinoic acid-inducible neural-specific protein 1 (761 aa).

Positions 1-19 are cleaved as a signal peptide; it reads MNWRFVELLYFLFIWGRIS. The MACPF domain maps to 68–251; sequence RYKIYREFAR…FVQSALSYIM (184 aa). 7 N-linked (GlcNAc...) asparagine glycosylation sites follow: N156, N433, N443, N553, N599, N631, and N677.

Belongs to the BRINP family. Highly expressed in brain. Weakly expressed in heart, lung, skeletal muscle, kidney, thymus, prostate, testis and small intestine.

The protein resides in the cytoplasm. Functionally, plays a role in neurogenesis and brain development. May suppress cell cycle progression in postmitotic neurons by inhibiting G1/S transition. This is BMP/retinoic acid-inducible neural-specific protein 1 (BRINP1) from Homo sapiens (Human).